The sequence spans 305 residues: Glutaminase (305 aa).

7 residues coordinate substrate: Ser61, Asn113, Glu158, Asn165, Tyr189, Tyr241, and Val259.

The protein belongs to the glutaminase family. Homotetramer.

It carries out the reaction L-glutamine + H2O = L-glutamate + NH4(+). This chain is Glutaminase, found in Alkaliphilus oremlandii (strain OhILAs) (Clostridium oremlandii (strain OhILAs)).